Consider the following 518-residue polypeptide: Centromere protein T (518 aa).

The segment at 1–70 (MADLSSPDGD…RKHSHGTGSV (70 aa)) is disordered. Positions 19–28 (HVLDTADSHT) are enriched in basic and acidic residues. Over residues 34 to 57 (STQTNPQRRRSQTPYSKRQGSQRK) the composition is skewed to polar residues. Phosphothreonine is present on T86. The tract at residues 94-381 (ILLTAPESST…EPHQLFEPPP (288 aa)) is flexible stalk domain. Disordered regions lie at residues 102 to 156 (STVM…KRKQ), 271 to 362 (VHHS…ELSS), and 375 to 412 (QLFE…HQDP). The span at 294-306 (TPSTGTRPQSQMS) shows a compositional bias: polar residues. S313, S324, S333, S345, S346, S357, and S382 each carry phosphoserine. Basic and acidic residues predominate over residues 326-343 (ELREAVGSKEAEEPKDLE). A compositionally biased stretch (low complexity) spans 384–395 (GVAAVSSESVPA).

The protein belongs to the CENP-T/CNN1 family. In terms of assembly, component of the CENPA-CAD complex, composed of CENPI, CENPK, CENPL, CENPO, CENPP, CENPQ, CENPR and CENPS. The CENPA-CAD complex is probably recruited on centromeres by the CENPA-NAC complex, at least composed of CENPA, CENPC, CENPH, CENPM, CENPN, CENPT and CENPU. Identified in a centromeric complex containing histones H2A, H2B, H3 and H4, and at least CENPA, CENPB, CENPC, CENPT, CENPN, HJURP, SUPT16H, SSRP1 and RSF1. Interacts (via N-terminus) with the NDC80 complex. Heterodimer with CENPW; this dimer coassembles with CENPS-CENPX heterodimers at centromeres to form the tetrameric CENP-T-W-S-X complex. Post-translationally, dynamically phosphorylated during the cell cycle. Phosphorylated during G2 phase, metaphase and anaphase, but not during telophase or G1 phase.

Its subcellular location is the nucleus. The protein resides in the chromosome. It localises to the centromere. It is found in the kinetochore. Its function is as follows. Component of the CENPA-NAC (nucleosome-associated) complex, a complex that plays a central role in assembly of kinetochore proteins, mitotic progression and chromosome segregation. The CENPA-NAC complex recruits the CENPA-CAD (nucleosome distal) complex and may be involved in incorporation of newly synthesized CENPA into centromeres. Part of a nucleosome-associated complex that binds specifically to histone H3-containing nucleosomes at the centromere, as opposed to nucleosomes containing CENPA. Component of the heterotetrameric CENP-T-W-S-X complex that binds and supercoils DNA, and plays an important role in kinetochore assembly. CENPT has a fundamental role in kinetochore assembly and function. It is one of the inner kinetochore proteins, with most further proteins binding downstream. Required for normal chromosome organization and normal progress through mitosis. This chain is Centromere protein T (Cenpt), found in Rattus norvegicus (Rat).